Consider the following 420-residue polypeptide: Calreticulin (420 aa).

The N-terminal stretch at 1–25 (MAIRKGSSYAVAALLALASVAAVAG) is a signal peptide. Residue Asn57 is glycosylated (N-linked (GlcNAc...) asparagine). Residues Tyr115, Lys117, Tyr134, and Asp141 each coordinate an alpha-D-glucoside. A run of 7 repeats spans residues 197–208 (KHTGSIYEHWDI), 216–227 (DPEAKKPEDWDD), 233–244 (DPEDKKPEGYDD), 251–262 (DPDAKKPEDWDD), 266–276 (GEWTAPTIPNP), 280–290 (GPWKQKKIKNP), and 294–304 (GKWKAPMIDNP). A 4 X approximate repeats region spans residues 197-262 (KHTGSIYEHW…DAKKPEDWDD (66 aa)). Residues 213–258 (KIKDPEAKKPEDWDDKEYIPDPEDKKPEGYDDIPKEIPDPDAKKPE) are compositionally biased toward basic and acidic residues. The interval 213–285 (KIKDPEAKKP…PEYKGPWKQK (73 aa)) is disordered. The interval 266-304 (GEWTAPTIPNPEYKGPWKQKKIKNPNYQGKWKAPMIDNP) is 3 X approximate repeats. Glu324 serves as a coordination point for an alpha-D-glucoside. The span at 355–381 (GKHKEAEKAAFDEAEKKKEEEDAAKGG) shows a compositional bias: basic and acidic residues. A disordered region spans residues 355–420 (GKHKEAEKAA…DSDDEKHDEL (66 aa)). A compositionally biased stretch (acidic residues) spans 382–402 (DDEDDDLEDEEDDEKADEDKA). Residues 403-420 (DSDAEDGKDSDDEKHDEL) are compositionally biased toward basic and acidic residues. The Prevents secretion from ER motif lies at 417–420 (HDEL).

Belongs to the calreticulin family.

It localises to the endoplasmic reticulum lumen. Molecular calcium-binding chaperone promoting folding, oligomeric assembly and quality control in the ER via the calreticulin/calnexin cycle. This lectin may interact transiently with almost all of the monoglucosylated glycoproteins that are synthesized in the ER. In Zea mays (Maize), this protein is Calreticulin (CRT).